The primary structure comprises 413 residues: MTNSTDGRADGRLRVVVLGSTGSIGTQALQVIADNPDRFEVVGLAAGGAHLDTLLRQRAQTGVTNIAVADEHAAQRVGDIPYHGSDAATRLVEQTEADVVLNALVGALGLRPTLAALKTGARLALANKESLVAGGSLVLRAARPGQIVPVDSEHSALAQCLRGGTPDEVAKLVLTASGGPFRGWSAADLEHVTPEQAGAHPTWSMGPMNTLNSASLVNKGLEVIETHLLFGIPYDRIDVVVHPQSIIHSMVTFIDGSTIAQASPPDMKLPISLALGWPRRVSGAAAACDFHTASSWEFEPLDTDVFPAVELARQAGVAGGCMTAVYNAANEEAAAAFLAGRIGFPAIVGIIADVLHAADQWAVEPATVDDVLDAQRWARERAQRAVSGMASVAIASTAKPGAAGRHASTLERS.

T21, G22, S23, I24, G47, and N127 together coordinate NADPH. K128 contributes to the 1-deoxy-D-xylulose 5-phosphate binding site. E129 lines the NADPH pocket. D151 serves as a coordination point for Mn(2+). Positions 152, 153, 177, and 200 each coordinate 1-deoxy-D-xylulose 5-phosphate. Residue E153 coordinates Mn(2+). Position 206 (G206) interacts with NADPH. 1-deoxy-D-xylulose 5-phosphate contacts are provided by S213, N218, K219, and E222. E222 serves as a coordination point for Mn(2+).

Belongs to the DXR family. Requires Mg(2+) as cofactor. It depends on Mn(2+) as a cofactor.

The catalysed reaction is 2-C-methyl-D-erythritol 4-phosphate + NADP(+) = 1-deoxy-D-xylulose 5-phosphate + NADPH + H(+). It functions in the pathway isoprenoid biosynthesis; isopentenyl diphosphate biosynthesis via DXP pathway; isopentenyl diphosphate from 1-deoxy-D-xylulose 5-phosphate: step 1/6. Catalyzes the NADPH-dependent rearrangement and reduction of 1-deoxy-D-xylulose-5-phosphate (DXP) to 2-C-methyl-D-erythritol 4-phosphate (MEP). This chain is 1-deoxy-D-xylulose 5-phosphate reductoisomerase, found in Mycobacterium bovis (strain ATCC BAA-935 / AF2122/97).